The primary structure comprises 343 residues: Sodium/bile acid cotransporter 7 (343 aa).

Topologically, residues 1-10 are cytoplasmic; that stretch reads MGLLERLRKE. A helical membrane pass occupies residues 11–31; that stretch reads WFIVGIILVIAAAKLEPTIGG. Topologically, residues 32-37 are extracellular; it reads KGGPLK. A helical transmembrane segment spans residues 38 to 58; sequence PEITITYIAVSAIFFNSGLSL. Residues 59–71 are Cytoplasmic-facing; sequence KTEELTNALMHVK. A helical transmembrane segment spans residues 72-92; that stretch reads LHLFVQLFTLVFFPTAIWVFL. Over 93-116 the chain is Extracellular; it reads QVLSLTPINEWLLKGLQTVSCMPP. Residues 117–137 form a helical membrane-spanning segment; sequence PVSSAVILTKAVGGNEAAAIF. A topological domain (cytoplasmic) is located at residue Asn-138. The helical transmembrane segment at 139–159 threads the bilayer; that stretch reads SAFGSFLGIVVTPLLLLLFLG. The Extracellular segment spans residues 160–163; sequence SSSS. The helical transmembrane segment at 164 to 184 threads the bilayer; it reads VPFTSIFSQLFMTVVVPLIIG. At 185–201 the chain is on the cytoplasmic side; the sequence is QIVRRYIKDWLERKKPP. Residues 202–222 form a helical membrane-spanning segment; sequence FGAISSCVLLMIIYTTFCDTF. The Extracellular portion of the chain corresponds to 223-234; the sequence is SNPNIDLDTFSL. A helical membrane pass occupies residues 235–255; the sequence is VIIVFIIFFIQLAFMLLTFLF. The Cytoplasmic portion of the chain corresponds to 256–270; that stretch reads STSKNTGFTPADTVA. A helical membrane pass occupies residues 271–291; sequence IVFCSTHKSLTLGIPMLKIVF. Residues 292-298 are Extracellular-facing; that stretch reads AGYEHLS. Residues 299–319 traverse the membrane as a helical segment; it reads LISVPLLIYHPAQILLGSVLV. The Cytoplasmic segment spans residues 320 to 343; the sequence is PTIKSWMLSRQKALKLTRQPKVPL.

This sequence belongs to the bile acid:sodium symporter (BASS) (TC 2.A.28) family.

The protein resides in the cell membrane. Its subcellular location is the endoplasmic reticulum membrane. It localises to the golgi apparatus membrane. Functionally, involved in teeth and skeletal development. Has an essential role in the biosynthesis and trafficking of glycosaminoglycans and glycoproteins to produce a proper functioning extracellular matrix. Required for extracellular matrix mineralization. Also involved in the regulation of cellular calcium homeostasis. Does not show transport activity towards bile acids or steroid sulfates. The protein is Sodium/bile acid cotransporter 7 (slc10a7) of Xenopus tropicalis (Western clawed frog).